The primary structure comprises 300 residues: ETS homologous factor (300 aa).

A PNT domain is found at 29–115 (STCNVSSGFF…SNLQHLKWNG (87 aa)). The tract at residues 179-204 (LPIAESPDTKKEQDHPTKPHTKKHNP) is disordered. Residues 185 to 195 (PDTKKEQDHPT) are compositionally biased toward basic and acidic residues. The segment at residues 207 to 289 (THLWEFIRDI…DGRRLVYKFG (83 aa)) is a DNA-binding region (ETS).

The protein belongs to the ETS family.

It is found in the nucleus. In terms of biological role, transcriptional activator that may play a role in regulating epithelial cell differentiation and proliferation. May act as a repressor for a specific subset of ETS/AP-1-responsive genes, and as a modulator of the nuclear response to mitogen-activated protein kinase signaling cascades. Binds to DNA sequences containing the consensus nucleotide core sequence GGAA. Involved in regulation of TNFRSF10B/DR5 expression through Ets-binding sequences on the TNFRSF10B/DR5 promoter. The protein is ETS homologous factor (EHF) of Bos taurus (Bovine).